A 434-amino-acid polypeptide reads, in one-letter code: Tryptophan dimethylallyltransferase nptA (434 aa).

L-tryptophan contacts are provided by residues 91–92 and glutamate 100; that span reads SL. Substrate is bound by residues arginine 115, lysine 202, and tyrosine 204. Tyrosine 206 lines the L-tryptophan pocket. Substrate contacts are provided by arginine 271, lysine 273, tyrosine 275, tyrosine 358, tyrosine 423, and tyrosine 427.

The protein belongs to the tryptophan dimethylallyltransferase family. As to quaternary structure, homodimer.

It carries out the reaction L-tryptophan + dimethylallyl diphosphate = 4-(3-methylbut-2-enyl)-L-tryptophan + diphosphate. Its pathway is secondary metabolite biosynthesis. Nonribosomal peptide synthase involved in the synthesis of nidulanin A and derived compounds. Nidulanin A is a tetracyclopeptide with the sequence L-Phe-L-Kyn-L-Val-D-Val and an isoprene unit N-linked to the amino group of L-kynurenine. The NRPS nlsA is responsible of the synthesis of the cyclopeptide and the prenyltransferase nptA adds the isoprene unit on the L-kynurenine residue of nidulanin A. Further modifications lead to additional oxygenated related compounds. In Emericella nidulans (strain FGSC A4 / ATCC 38163 / CBS 112.46 / NRRL 194 / M139) (Aspergillus nidulans), this protein is Tryptophan dimethylallyltransferase nptA.